Here is a 245-residue protein sequence, read N- to C-terminus: NADH-quinone oxidoreductase subunit C (245 aa).

A compositionally biased stretch (basic and acidic residues) spans 1–10; that stretch reads MNAPQDRTDD. Disordered stretches follow at residues 1–54 and 217–245; these read MNAP…GYGG and QRKD…RSYQ. Over residues 11 to 28 the composition is skewed to low complexity; that stretch reads GGVPVPVTPAGATGGAPA. A compositionally biased stretch (gly residues) spans 39–54; it reads GMFGDQGTGDVSGYGG.

The protein belongs to the complex I 30 kDa subunit family. As to quaternary structure, NDH-1 is composed of 14 different subunits. Subunits NuoB, C, D, E, F, and G constitute the peripheral sector of the complex.

The protein resides in the cell membrane. The enzyme catalyses a quinone + NADH + 5 H(+)(in) = a quinol + NAD(+) + 4 H(+)(out). NDH-1 shuttles electrons from NADH, via FMN and iron-sulfur (Fe-S) centers, to quinones in the respiratory chain. The immediate electron acceptor for the enzyme in this species is believed to be a menaquinone. Couples the redox reaction to proton translocation (for every two electrons transferred, four hydrogen ions are translocated across the cytoplasmic membrane), and thus conserves the redox energy in a proton gradient. This is NADH-quinone oxidoreductase subunit C from Salinispora arenicola (strain CNS-205).